We begin with the raw amino-acid sequence, 302 residues long: Glycine--tRNA ligase alpha subunit (302 aa).

It belongs to the class-II aminoacyl-tRNA synthetase family. As to quaternary structure, tetramer of two alpha and two beta subunits.

The protein resides in the cytoplasm. The catalysed reaction is tRNA(Gly) + glycine + ATP = glycyl-tRNA(Gly) + AMP + diphosphate. This Edwardsiella ictaluri (strain 93-146) protein is Glycine--tRNA ligase alpha subunit.